Consider the following 206-residue polypeptide: Large ribosomal subunit protein uL4 (206 aa).

A disordered region spans residues 55–80; sequence AFVSGGGAKPWRQKGTGRARSGSNRS.

This sequence belongs to the universal ribosomal protein uL4 family. As to quaternary structure, part of the 50S ribosomal subunit.

In terms of biological role, one of the primary rRNA binding proteins, this protein initially binds near the 5'-end of the 23S rRNA. It is important during the early stages of 50S assembly. It makes multiple contacts with different domains of the 23S rRNA in the assembled 50S subunit and ribosome. Forms part of the polypeptide exit tunnel. The protein is Large ribosomal subunit protein uL4 of Nitratidesulfovibrio vulgaris (strain DSM 19637 / Miyazaki F) (Desulfovibrio vulgaris).